Consider the following 565-residue polypeptide: Sulfite reductase [NADPH] hemoprotein beta-component (565 aa).

4 residues coordinate [4Fe-4S] cluster: cysteine 429, cysteine 435, cysteine 474, and cysteine 478. Cysteine 478 contacts siroheme.

Belongs to the nitrite and sulfite reductase 4Fe-4S domain family. In terms of assembly, alpha(8)-beta(8). The alpha component is a flavoprotein, the beta component is a hemoprotein. Siroheme is required as a cofactor. Requires [4Fe-4S] cluster as cofactor.

The enzyme catalyses hydrogen sulfide + 3 NADP(+) + 3 H2O = sulfite + 3 NADPH + 4 H(+). Its pathway is sulfur metabolism; hydrogen sulfide biosynthesis; hydrogen sulfide from sulfite (NADPH route): step 1/1. Its function is as follows. Component of the sulfite reductase complex that catalyzes the 6-electron reduction of sulfite to sulfide. This is one of several activities required for the biosynthesis of L-cysteine from sulfate. This Pseudoalteromonas translucida (strain TAC 125) protein is Sulfite reductase [NADPH] hemoprotein beta-component.